Here is a 306-residue protein sequence, read N- to C-terminus: Large ribosomal subunit protein mL45 (306 aa).

Positions 287–306 are disordered; that stretch reads LKPEEEYEEAQGEAQKPQLA.

The protein belongs to the mitochondrion-specific ribosomal protein mL45 family. As to quaternary structure, component of the mitochondrial large ribosomal subunit (mt-LSU). Mature mammalian 55S mitochondrial ribosomes consist of a small (28S) and a large (39S) subunit. The 28S small subunit contains a 12S ribosomal RNA (12S mt-rRNA) and 30 different proteins. The 39S large subunit contains a 16S rRNA (16S mt-rRNA), a copy of mitochondrial valine transfer RNA (mt-tRNA(Val)), which plays an integral structural role, and 52 different proteins.

It is found in the mitochondrion. Component of the mitochondrial large ribosomal subunit (mt-LSU). Within the mitochondrial ribosomes, required to direct the nascent polypeptide toward the tunnel exit and position the exit at a distance from the membrane surface. This is Large ribosomal subunit protein mL45 from Homo sapiens (Human).